Here is a 596-residue protein sequence, read N- to C-terminus: DNA primase (596 aa).

Residues 41 to 65 (CPFHHEKTPSFSVSQDKQIYKCFGC) form a CHC2-type zinc finger. The Toprim domain occupies 255–336 (DTIIIVEGYM…DIKIIKIPDG (82 aa)). Glu-261, Asp-305, and Asp-307 together coordinate Mg(2+).

The protein belongs to the DnaG primase family. In terms of assembly, monomer. Interacts with DnaB. The cofactor is Zn(2+). Requires Mg(2+) as cofactor.

The enzyme catalyses ssDNA + n NTP = ssDNA/pppN(pN)n-1 hybrid + (n-1) diphosphate.. Functionally, RNA polymerase that catalyzes the synthesis of short RNA molecules used as primers for DNA polymerase during DNA replication. This chain is DNA primase, found in Clostridium acetobutylicum (strain ATCC 824 / DSM 792 / JCM 1419 / IAM 19013 / LMG 5710 / NBRC 13948 / NRRL B-527 / VKM B-1787 / 2291 / W).